A 227-amino-acid chain; its full sequence is MLLHIPNVLNAEQLRLVRERLDQAGDAWVDGRATAGYQGAPVKRNQQIAEHTPVARELGDVILASIERNPLFISAVLPNQVYPPLFNRYEGGMQFGSHVDGAVRVLPNGVKLRTDVSVTLFISDPADYDGGELVIEDTYGVQQVKLPAGDMIVYPATSLHQVTPVTRGARIASFFWVQSLVRSDTQRAMLFDMDTAIQRLNASHADDTARRSLVGIYHNLLRTWSET.

The Fe2OG dioxygenase domain maps to 80–179; the sequence is QVYPPLFNRY…RIASFFWVQS (100 aa). Residues His-98, Asp-100, and His-160 each coordinate Fe cation. Residue Arg-170 coordinates 2-oxoglutarate.

It depends on Fe(2+) as a cofactor. L-ascorbate is required as a cofactor.

In Paraburkholderia phytofirmans (strain DSM 17436 / LMG 22146 / PsJN) (Burkholderia phytofirmans), this protein is PKHD-type hydroxylase Bphyt_7102.